The primary structure comprises 585 residues: Probable monoterpene synthase MTS1, chloroplastic (585 aa).

Positions 1–29 are disordered; it reads MSLSGVPLSAGLAPSPSNKPTNGKGQNIV. The transit peptide at 1 to 31 directs the protein to the chloroplast; sequence MSLSGVPLSAGLAPSPSNKPTNGKGQNIVRR. Polar residues predominate over residues 15-25; it reads SPSNKPTNGKG. The (2E)-geranyl diphosphate site is built by R298, D335, D339, R476, and D479. Residues D335 and D339 each contribute to the Mg(2+) site. The DDXXD motif motif lies at 335 to 339; it reads DDIYD. Residues D479, T483, and E487 each coordinate Mg(2+).

This sequence belongs to the terpene synthase family. Tpsb subfamily. Mg(2+) serves as cofactor. The cofactor is Mn(2+). As to expression, expressed in trichomes. Detected in flowers, but not in leaves.

It localises to the plastid. It is found in the chloroplast. The polypeptide is Probable monoterpene synthase MTS1, chloroplastic (Humulus lupulus (European hop)).